We begin with the raw amino-acid sequence, 359 residues long: Guanine nucleotide-binding protein-like alpha-11 subunit (359 aa).

Glycine 2 is lipidated: N-myristoyl glycine. A G-alpha domain is found at 29–359 (KLIKILMMGN…YVKKILEDTI (331 aa)). Residues 32-45 (KILMMGNENSAKST) form a G1 motif region. Serine 44 contacts Mg(2+). A G2 motif region spans residues 176-185 (DIIRCSKNNQ). GTP-binding positions include 178–185 (IRCSKNNQ), 204–208 (DTGNQ), and 281–284 (NKKE). Residues 200–209 (FVFVDTGNQK) form a G3 motif region. The segment at 277 to 284 (IVLFNKKE) is G4 motif. Residues 337–342 (FNSSDT) form a G5 motif region.

It belongs to the G-alpha family.

The sequence is that of Guanine nucleotide-binding protein-like alpha-11 subunit (gpaK) from Dictyostelium discoideum (Social amoeba).